The following is a 312-amino-acid chain: Ribosomal protein L11 methyltransferase (312 aa).

S-adenosyl-L-methionine contacts are provided by T162, G183, D205, and N248.

It belongs to the methyltransferase superfamily. PrmA family.

Its subcellular location is the cytoplasm. It catalyses the reaction L-lysyl-[protein] + 3 S-adenosyl-L-methionine = N(6),N(6),N(6)-trimethyl-L-lysyl-[protein] + 3 S-adenosyl-L-homocysteine + 3 H(+). Methylates ribosomal protein L11. This Geobacillus kaustophilus (strain HTA426) protein is Ribosomal protein L11 methyltransferase.